Reading from the N-terminus, the 444-residue chain is Type I restriction enzyme EcoDI specificity subunit (444 aa).

The protein belongs to the type-I restriction system S methylase family. The type I restriction/modification system is composed of three polypeptides R, M and S; the restriction enzyme has stoichiometry R(2)M(2)S(1) while the methyltransferase is M(2)S(1).

Functionally, the specificity (S) subunit of a type I restriction enzyme; this subunit dictates DNA sequence specificity. The M and S subunits together form a methyltransferase (MTase) that methylates two adenine residues of the sequence 5'-TTAN(7)GTCY-3'. In the presence of the R subunit the complex can also act as an endonuclease, binding to the same target sequence but cutting the DNA some distance from this site. Whether the DNA is cut or modified depends on the methylation state of the target sequence. When the target site is unmodified, the DNA is cut. When the target site is hemimethylated, the complex acts as a maintenance MTase modifying the DNA so that both strands become methylated. After locating a non-methylated recognition site, the enzyme complex serves as a molecular motor that translocates DNA in an ATP-dependent manner until a collision occurs that triggers cleavage. The protein is Type I restriction enzyme EcoDI specificity subunit of Escherichia coli.